The following is a 429-amino-acid chain: Phosphoribosylamine--glycine ligase (429 aa).

The ATP-grasp domain maps to 109 to 316 (KDFLARHKIP…LVELCLAACE (208 aa)). 135–196 (LREKGAPIVI…EEFLDGEEAS (62 aa)) lines the ATP pocket. Residues 212 to 236 (SQDHKRVGDKDTGPNTGGMGAYSPA) are disordered. Residues 213–223 (QDHKRVGDKDT) are compositionally biased toward basic and acidic residues. E286 and N288 together coordinate Mg(2+).

It belongs to the GARS family. In terms of assembly, monomer. Mg(2+) serves as cofactor. Mn(2+) is required as a cofactor.

It carries out the reaction 5-phospho-beta-D-ribosylamine + glycine + ATP = N(1)-(5-phospho-beta-D-ribosyl)glycinamide + ADP + phosphate + H(+). It functions in the pathway purine metabolism; IMP biosynthesis via de novo pathway; N(1)-(5-phospho-D-ribosyl)glycinamide from 5-phospho-alpha-D-ribose 1-diphosphate: step 2/2. Catalyzes the reversible conversion of phosphoribosylamine to glycinamide ribonucleotide, an enzymatic step in purine biosynthesis pathway. In Escherichia coli (strain K12), this protein is Phosphoribosylamine--glycine ligase (purD).